The primary structure comprises 352 residues: UDP-N-acetylglucosamine--N-acetylmuramyl-(pentapeptide) pyrophosphoryl-undecaprenol N-acetylglucosamine transferase 2 (352 aa).

UDP-N-acetyl-alpha-D-glucosamine is bound by residues Ser11–Gly13, Arg164, Ser194, and Gln289.

The protein belongs to the glycosyltransferase 28 family. MurG subfamily.

The protein resides in the cell membrane. The enzyme catalyses di-trans,octa-cis-undecaprenyl diphospho-N-acetyl-alpha-D-muramoyl-L-alanyl-D-glutamyl-meso-2,6-diaminopimeloyl-D-alanyl-D-alanine + UDP-N-acetyl-alpha-D-glucosamine = di-trans,octa-cis-undecaprenyl diphospho-[N-acetyl-alpha-D-glucosaminyl-(1-&gt;4)]-N-acetyl-alpha-D-muramoyl-L-alanyl-D-glutamyl-meso-2,6-diaminopimeloyl-D-alanyl-D-alanine + UDP + H(+). Its pathway is cell wall biogenesis; peptidoglycan biosynthesis. In terms of biological role, cell wall formation. Catalyzes the transfer of a GlcNAc subunit on undecaprenyl-pyrophosphoryl-MurNAc-pentapeptide (lipid intermediate I) to form undecaprenyl-pyrophosphoryl-MurNAc-(pentapeptide)GlcNAc (lipid intermediate II). The polypeptide is UDP-N-acetylglucosamine--N-acetylmuramyl-(pentapeptide) pyrophosphoryl-undecaprenol N-acetylglucosamine transferase 2 (Bacillus cereus (strain ATCC 14579 / DSM 31 / CCUG 7414 / JCM 2152 / NBRC 15305 / NCIMB 9373 / NCTC 2599 / NRRL B-3711)).